The chain runs to 259 residues: MNRFENKIIIITGAAGGIGASTTRRIVSEGGKVVIADYSREKADQFAAELSNSGADVRPVYFSATELKSCKELITFTMKEYGQIDVLVNNVGGTNPRRDTNIETLDMDYFDEAFHLNLSCTMYLSQLVIPIMSTQGGGNIVNVASISGITADSNGTLYGASKAGVINLTKYIATQTGKKNIRCNAVAPGLILTPAALNNLNEEVRKIFLGQCATPYLGEPQDVAATIAFLASEDARYITGQTIVVDGGLTIHNPTINLV.

NAD(+) contacts are provided by residues isoleucine 18, 37–38 (DY), and asparagine 90. Glycochenodeoxycholate-binding residues include serine 145 and tyrosine 158. Residues tyrosine 158, lysine 162, and 191–193 (ILT) each bind NAD(+). Tyrosine 158 acts as the Proton acceptor in catalysis.

It belongs to the short-chain dehydrogenases/reductases (SDR) family. Homotetramer.

The enzyme catalyses cholate + NAD(+) = 3alpha,12alpha-dihydroxy-7-oxo-5beta-cholanate + NADH + H(+). It carries out the reaction chenodeoxycholate + NAD(+) = 7-oxolithocholate + NADH + H(+). It catalyses the reaction taurochenodeoxycholate + NAD(+) = 7-oxotaurolithocholate + NADH + H(+). The catalysed reaction is glycochenodeoxycholate + NAD(+) = 7-oxoglycolithocholate + NADH + H(+). The enzyme catalyses taurocholate + NAD(+) = 7-oxo-taurodeoxycholate + NADH + H(+). It carries out the reaction glycocholate + NAD(+) = 7-oxo-glycodeoxycholate + NADH + H(+). It catalyses the reaction an aromatic primary alcohol + NAD(+) = an aromatic aldehyde + NADH + H(+). The catalysed reaction is benzyl alcohol + NAD(+) = benzaldehyde + NADH + H(+). The enzyme catalyses 4-cyanobenzyl alcohol + NAD(+) = 4-cyanobenzaldehyde + NADH + H(+). It carries out the reaction 4-acetoxybenzyl alcohol + NAD(+) = 4-acetoxybenzaldehyde + NADH + H(+). It catalyses the reaction 4-(trifluoromethyl)benzyl alcohol + NAD(+) = 4-(trifluoromethyl)benzaldehyde + NADH + H(+). Its function is as follows. 7alpha-hydroxysteroid dehydrogenase involved in the metabolism of bile acids in the gut. Catalyzes the NAD(+)-dependent oxidation of the 7alpha-hydroxy group of 7alpha-hydroxysteroids, such as cholate, chenodeoxycholate, taurochenodeoxycholate, glycochenodeoxycholate, taurocholate and glycocholate, to the corresponding 7-oxosteroids. Since it is also able to catalyze the reduction of nonsteroidal carbonyl compounds such as various benzaldehyde analogs to their corresponding benzyl alcohols, this enzyme may also function in the detoxification of xenobiotics containing carbonyl groups in the large intestine. This chain is 7alpha-hydroxysteroid dehydrogenase, found in Bacteroides fragilis (strain ATCC 25285 / DSM 2151 / CCUG 4856 / JCM 11019 / LMG 10263 / NCTC 9343 / Onslow / VPI 2553 / EN-2).